The primary structure comprises 365 residues: Pectate trisaccharide-lyase (365 aa).

The N-terminal stretch at Met1 to Ala25 is a signal peptide. Asp142, Asp164, and Asp168 together coordinate Ca(2+). The stretch at Ser149 to Lys171 is one PbH1 1 repeat. The active site involves Arg222. A PbH1 2 repeat occupies Gly261–Pro287.

Belongs to the polysaccharide lyase 1 family. In terms of assembly, homotetramer. It depends on Ca(2+) as a cofactor.

It localises to the secreted. It carries out the reaction eliminative cleavage of unsaturated trigalacturonate as the major product from the reducing end of polygalacturonic acid/pectate.. In terms of biological role, cleaves unsaturated trigalacturonate from pectin. Activity is highest towards polygalacturonic acid, activity on methylated pectins decreases with an increasing degree of methylation. This is Pectate trisaccharide-lyase from Thermotoga sp. (strain RQ2).